The sequence spans 198 residues: Nucleoside triphosphate pyrophosphatase (198 aa).

Residue D75 is the Proton acceptor of the active site.

The protein belongs to the Maf family. Requires a divalent metal cation as cofactor.

Its subcellular location is the cytoplasm. It carries out the reaction a ribonucleoside 5'-triphosphate + H2O = a ribonucleoside 5'-phosphate + diphosphate + H(+). It catalyses the reaction a 2'-deoxyribonucleoside 5'-triphosphate + H2O = a 2'-deoxyribonucleoside 5'-phosphate + diphosphate + H(+). Functionally, nucleoside triphosphate pyrophosphatase. May have a dual role in cell division arrest and in preventing the incorporation of modified nucleotides into cellular nucleic acids. The sequence is that of Nucleoside triphosphate pyrophosphatase from Hyphomonas neptunium (strain ATCC 15444).